We begin with the raw amino-acid sequence, 240 residues long: Vesicle-associated membrane protein 727 (240 aa).

Residues 1–215 lie on the Cytoplasmic side of the membrane; it reads MSQKGLIYSF…MWLQSLQMKL (215 aa). A Longin domain is found at 6 to 133; the sequence is LIYSFVAKGT…NLDREFGPIL (128 aa). The v-SNARE coiled-coil homology domain occupies 149-209; sequence KLSKLKAQIT…RQLRRKMWLQ (61 aa). The chain crosses the membrane as a helical; Anchor for type IV membrane protein span at residues 216-236; sequence MVAGAVFSFILIVWVVACGGF. At 237 to 240 the chain is on the vesicular side; sequence KCSS.

This sequence belongs to the synaptobrevin family. In terms of assembly, interacts with subunits of the class C core vacuole/endosome tethering (CORVET) complex including VPS11, VCL1, VPS18, VPS33, VPS3 and VPS8. Highly expressed in flowers. Detected in leaves, stems and roots.

It localises to the early endosome membrane. Its subcellular location is the endosome membrane. Involved in the targeting and/or fusion of transport vesicles to their target membrane. This Arabidopsis thaliana (Mouse-ear cress) protein is Vesicle-associated membrane protein 727 (VAMP727).